Consider the following 452-residue polypeptide: Chromosomal replication initiator protein DnaA (452 aa).

Positions 1 to 72 (MPDMLTLWTD…LVEYAYQAAH (72 aa)) are domain I, interacts with DnaA modulators. The segment at 72–114 (HEDIQPVLILENERQQQATLKAKTAPVAAGEPVEPTPTFMKET) is domain II. Residues 115 to 331 (ALNSRYTFDT…GALARVQAYS (217 aa)) form a domain III, AAA+ region region. The ATP site is built by Gly-159, Gly-161, Lys-162, and Thr-163. Positions 332-452 (QLMHQPIATD…IDSLKDDLRR (121 aa)) are domain IV, binds dsDNA.

Belongs to the DnaA family. Oligomerizes as a right-handed, spiral filament on DNA at oriC.

It is found in the cytoplasm. Its function is as follows. Plays an essential role in the initiation and regulation of chromosomal replication. ATP-DnaA binds to the origin of replication (oriC) to initiate formation of the DNA replication initiation complex once per cell cycle. Binds the DnaA box (a 9 base pair repeat at the origin) and separates the double-stranded (ds)DNA. Forms a right-handed helical filament on oriC DNA; dsDNA binds to the exterior of the filament while single-stranded (ss)DNA is stabiized in the filament's interior. The ATP-DnaA-oriC complex binds and stabilizes one strand of the AT-rich DNA unwinding element (DUE), permitting loading of DNA polymerase. After initiation quickly degrades to an ADP-DnaA complex that is not apt for DNA replication. Binds acidic phospholipids. The chain is Chromosomal replication initiator protein DnaA from Levilactobacillus brevis (strain ATCC 367 / BCRC 12310 / CIP 105137 / JCM 1170 / LMG 11437 / NCIMB 947 / NCTC 947) (Lactobacillus brevis).